The primary structure comprises 450 residues: Adenosylhomocysteinase (450 aa).

Substrate contacts are provided by Thr-59, Asp-135, and Glu-160. 161–163 (TTT) provides a ligand contact to NAD(+). Positions 190 and 194 each coordinate substrate. Residues Asn-195, 224 to 229 (GFGDVG), Glu-247, 303 to 305 (IGH), and Asn-350 each bind NAD(+).

The protein belongs to the adenosylhomocysteinase family. It depends on NAD(+) as a cofactor.

It is found in the cytoplasm. The catalysed reaction is S-adenosyl-L-homocysteine + H2O = L-homocysteine + adenosine. Its pathway is amino-acid biosynthesis; L-homocysteine biosynthesis; L-homocysteine from S-adenosyl-L-homocysteine: step 1/1. Adenosylhomocysteine is a competitive inhibitor of S-adenosyl-L-methionine-dependent methyl transferase reactions; therefore adenosylhomocysteinase may play a key role in the control of methylations via regulation of the intracellular concentration of adenosylhomocysteine. The sequence is that of Adenosylhomocysteinase (SAH1) from Candida albicans (strain SC5314 / ATCC MYA-2876) (Yeast).